Here is a 787-residue protein sequence, read N- to C-terminus: RNA-directed RNA polymerase 2a (787 aa).

The 115-residue stretch at 505 to 619 folds into the RdRp catalytic domain; that stretch reads KCLTEIDLSK…VTDRPLEGRV (115 aa).

It belongs to the ssRNA positive-strand viruses RNA-directed RNA polymerase family. As to quaternary structure, interacts with replication protein 1a.

The catalysed reaction is RNA(n) + a ribonucleoside 5'-triphosphate = RNA(n+1) + diphosphate. RNA-dependent RNA polymerase which replicates the viral genome composed of 3 RNA segments, RNA1, RNA2 and RNA3. The protein is RNA-directed RNA polymerase 2a of Olive latent virus 2 (isolate Italy) (OLV-2).